A 478-amino-acid polypeptide reads, in one-letter code: MRFTFTRQFLAFFILISNPASILPRSENLTFPTFEPEPYLYSVGRKKLVDAQYRCYDRMQQLPPYEGEGPYCNRTWDGWMCWDDTPAGVLSVQLCPDYFPDFDPTEKVTKYCDESGVWFKHPENNRTWSNYTLCNAFTPEKLQNAYVLYYLAIVGHSMSIITLVVSLGIFVYFRSLGCQRVTLHKNMFLTYILNSMIIIIHLVEVVPNGELVRKDPVSCKILHFFHQYMMACNYFWMLCEGIYLHTLIVVSVFNEAKHLRWYYLLGWGFPLVPTTIHAITRALYFNDNCWISVDTHLLYIIHGPVMVALVVNFFFLLNIVRVLVTKMRETHEAESYMYLKAVKATMILVPLLGIQFVVFPWRPSNKVLGKIYDYFMHSLIHFQGFFVATIYCFCNNEVQTTLKRQWAQFKIQWNQRWGTRPSNRSAAARAAAAAAEAGGDNIPVYICHQEPRNDPPNNQGEEGAEMIVLNIIEKESSA.

Positions Met-1–Ile-22 are cleaved as a signal peptide. The Extracellular portion of the chain corresponds to Leu-23–Tyr-146. N-linked (GlcNAc...) asparagine glycans are attached at residues Asn-28, Asn-73, Asn-125, and Asn-130. 3 disulfides stabilise this stretch: Cys-55/Cys-81, Cys-72/Cys-112, and Cys-95/Cys-134. Residues Val-147–Ile-169 traverse the membrane as a helical segment. At Phe-170 to Val-181 the chain is on the cytoplasmic side. A helical transmembrane segment spans residues Thr-182–Leu-202. At Val-203 to Cys-219 the chain is on the extracellular side. An intrachain disulfide couples Cys-219 to Cys-289. Residues Lys-220–Ile-242 form a helical membrane-spanning segment. Topologically, residues Tyr-243–Leu-259 are cytoplasmic. Residues Arg-260–Thr-280 traverse the membrane as a helical segment. Topologically, residues Arg-281–His-296 are extracellular. A helical transmembrane segment spans residues Leu-297–Val-320. At Arg-321 to Lys-340 the chain is on the cytoplasmic side. The chain crosses the membrane as a helical span at residues Ala-341–Phe-359. Topologically, residues Pro-360–Val-367 are extracellular. Residues Leu-368–Cys-394 form a helical membrane-spanning segment. Residues Asn-395–Ala-478 lie on the Cytoplasmic side of the membrane.

It belongs to the G-protein coupled receptor 2 family. Heterodimer of CALCR and RAMP1, RAMP2 or RAMP3; the receptor complexes function as AMYR1, AMYR2 and AMYR3 receptors, respectively, and respond to amylin/IAPP, calcitonin/CT and CGRP1 ligands. Interacts with GPRASP2.

It is found in the cell membrane. Its function is as follows. G protein-coupled receptor activated by ligand peptides amylin (IAPP), calcitonin (CT/CALCA) and calcitonin gene-related peptide type 1 (CGRP1/CALCA). CALCR interacts with receptor-activity-modifying proteins RAMP1, 2 and 3 to form receptor complexes AMYR1, 2 and 3, respectively. IAPP, CT and CGRP1 activate CALCR and AMYRs with distinct modes of receptor activation resulting in specific phenotypes. Ligand binding causes a conformation change that triggers signaling via guanine nucleotide-binding proteins (G proteins) and modulates the activity of downstream effectors. Activates cAMP-dependent pathway. The chain is Calcitonin receptor from Cavia porcellus (Guinea pig).